A 57-amino-acid polypeptide reads, in one-letter code: Large ribosomal subunit protein eL20 (57 aa).

The protein belongs to the eukaryotic ribosomal protein eL20 family. As to quaternary structure, part of the 50S ribosomal subunit. Binds 23S rRNA.

This is Large ribosomal subunit protein eL20 from Archaeoglobus fulgidus (strain ATCC 49558 / DSM 4304 / JCM 9628 / NBRC 100126 / VC-16).